We begin with the raw amino-acid sequence, 103 residues long: MAGARRRARCPASAGCAYSARPPPLSTRGRRISAGSGQPRWWPWGSPPPLDTRYRRPGPGRRARSCLHAGPRGRPPHSRTRARRTSPGAGGGGWRGGSCTSQR.

The tract at residues 1–103 (MAGARRRARC…WRGGSCTSQR (103 aa)) is disordered. Composition is skewed to basic residues over residues 55–65 (RRPGPGRRARS) and 74–84 (RPPHSRTRARR).

This sequence belongs to the epstein-barr virus RPMS1 family.

This is an uncharacterized protein from Epstein-Barr virus (strain GD1) (HHV-4).